A 331-amino-acid polypeptide reads, in one-letter code: Glyceraldehyde-3-phosphate dehydrogenase 2 (331 aa).

NAD(+) contacts are provided by residues 11–12 (RI), aspartate 33, and arginine 78. Residues 148–150 (SCT), threonine 179, 208–209 (TG), and arginine 231 contribute to the D-glyceraldehyde 3-phosphate site. Cysteine 149 functions as the Nucleophile in the catalytic mechanism. Residue asparagine 313 coordinates NAD(+).

It belongs to the glyceraldehyde-3-phosphate dehydrogenase family. As to quaternary structure, homotetramer.

It is found in the cytoplasm. The catalysed reaction is D-glyceraldehyde 3-phosphate + phosphate + NAD(+) = (2R)-3-phospho-glyceroyl phosphate + NADH + H(+). It functions in the pathway carbohydrate degradation; glycolysis; pyruvate from D-glyceraldehyde 3-phosphate: step 1/5. The polypeptide is Glyceraldehyde-3-phosphate dehydrogenase 2 (GAP2) (Kluyveromyces marxianus (Yeast)).